A 347-amino-acid polypeptide reads, in one-letter code: NADH-quinone oxidoreductase subunit H (347 aa).

The next 8 helical transmembrane spans lie at Leu13–Ile33, Gly82–Ile102, Val115–Gly135, Ile161–Val181, Phe198–Leu218, Phe248–Ile268, Phe283–Ile303, and Leu321–Leu341.

This sequence belongs to the complex I subunit 1 family. In terms of assembly, NDH-1 is composed of 14 different subunits. Subunits NuoA, H, J, K, L, M, N constitute the membrane sector of the complex.

The protein localises to the cell inner membrane. It carries out the reaction a quinone + NADH + 5 H(+)(in) = a quinol + NAD(+) + 4 H(+)(out). In terms of biological role, NDH-1 shuttles electrons from NADH, via FMN and iron-sulfur (Fe-S) centers, to quinones in the respiratory chain. The immediate electron acceptor for the enzyme in this species is believed to be ubiquinone. Couples the redox reaction to proton translocation (for every two electrons transferred, four hydrogen ions are translocated across the cytoplasmic membrane), and thus conserves the redox energy in a proton gradient. This subunit may bind ubiquinone. The polypeptide is NADH-quinone oxidoreductase subunit H (Mesorhizobium japonicum (strain LMG 29417 / CECT 9101 / MAFF 303099) (Mesorhizobium loti (strain MAFF 303099))).